We begin with the raw amino-acid sequence, 93 residues long: Corticostatin 1 (93 aa).

The signal sequence occupies residues 1 to 19 (MRTLILLAAILLAALQAQA). The propeptide occupies 20-59 (ELFSVNVDEVLDQQQPGSDQDLVIHLTGEESSALQVPDTK). Cystine bridges form between cysteine 62–cysteine 90, cysteine 64–cysteine 79, and cysteine 69–cysteine 89.

Belongs to the alpha-defensin family.

The protein localises to the secreted. Microbicidal activity and inhibits corticotropin (ACTH) stimulated corticosterone production. The sequence is that of Corticostatin 1 from Oryctolagus cuniculus (Rabbit).